Consider the following 91-residue polypeptide: UPF0147 protein DKAM_0139 (91 aa).

This sequence belongs to the UPF0147 family.

In Desulfurococcus amylolyticus (strain DSM 18924 / JCM 16383 / VKM B-2413 / 1221n) (Desulfurococcus kamchatkensis), this protein is UPF0147 protein DKAM_0139.